Here is a 554-residue protein sequence, read N- to C-terminus: MAYYRTPHDVTALPAWQALKDHRQAMQDFSMREAFNADPQRFNQFTLSSCGLFLDYSKNLINAETRNLLVGLANEVDLKGAIKALFDGEIVNSSEGRPALHTALRRPVGDKLSVNGVNVMPEVHKVLNQITDLVGRIHDGLWRGYTEKPITDVVNIGIGGSFLGPELVSEALLSYAQKGVRCHYLANIDGSEFHELTQKLRAETTLFIVSSKSFNTLETLKNAQAARAWYLAQGGSEAELYRHFIAVSSNNAAAVAFGIREENIFPMWDWVGGRYSLWSAIGLPIALAIGMSNFKELLSGAYTMDQHFQSAPFEQNMPVLLALLGVWYGNFWGAQSHAILPYDHYLRNITKHLQQLDMESNGKSVRQDGTPVSTDTGPVIWGGVGCNGQHAYHQLLHQGTQLIPADFIVPIVSFNPVSDHHQWLYANCLSQSQALMLGKTLPEAEAELRDKGMSEDQVQKLAPHKVIPGNRPSNTLVVERISPRRLGALVAMYEHKVFVQSVVWGINAFDQWGVELGKELGKGVYNRLVGSEETAAEDASTQGLINYFRGRHRG.

E359 (proton donor) is an active-site residue. Residues H390 and K518 contribute to the active site.

Belongs to the GPI family.

It is found in the cytoplasm. It catalyses the reaction alpha-D-glucose 6-phosphate = beta-D-fructose 6-phosphate. It participates in carbohydrate biosynthesis; gluconeogenesis. It functions in the pathway carbohydrate degradation; glycolysis; D-glyceraldehyde 3-phosphate and glycerone phosphate from D-glucose: step 2/4. Catalyzes the reversible isomerization of glucose-6-phosphate to fructose-6-phosphate. This is Glucose-6-phosphate isomerase from Pseudomonas fluorescens (strain Pf0-1).